The primary structure comprises 558 residues: Factor VII-activating protease (558 aa).

An N-terminal signal peptide occupies residues 1–23 (MFARMSDLHVLLLMVLAGKTAFG). A glycan (N-linked (GlcNAc...) asparagine) is linked at Asn54. 3 EGF-like domains span residues 71-107 (EDDPCLSNPCTHGGDCLVSGATFTCRCPDPFSGNRCQ), 109-146 (VQNKCKNNPCGRGDCLITQSPPYHRCACKHPYRGSDCS), and 148-186 (VVPVCRPNPCQNGGTCSRQRRRSKFTCACPDQFKGKLCE). 18 disulfide bridges follow: Cys75–Cys86, Cys80–Cys95, Cys97–Cys106, Cys113–Cys123, Cys118–Cys134, Cys136–Cys145, Cys152–Cys163, Cys157–Cys174, Cys176–Cys185, Cys192–Cys274, Cys213–Cys255, Cys244–Cys269, Cys299–Cys433, Cys345–Cys361, Cys353–Cys422, Cys445–Cys513, Cys475–Cys491, and Cys503–Cys531. Residues 191-274 (DCYVDDGYSY…KWEYCDVPAC (84 aa)) enclose the Kringle domain. The 242-residue stretch at 312 to 553 (IFGGFKSTAG…FLTWIKATME (242 aa)) folds into the Peptidase S1 domain. Active-site charge relay system residues include His360 and Asp409. Residue Ser507 is the Charge relay system of the active site.

This sequence belongs to the peptidase S1 family. In terms of assembly, heterodimer; disulfide-linked. Heterodimer of a 50 kDa heavy and a 27 kDa light chain linked by a disulfide bond. Proteolytic cleavage at Gly-23 or Leu-27 can give rise to the 50 kDa heavy chain (HC) and cleavage at Arg-311 or Lys-317 can give rise to the 27 kDa light chain (LC). The HC can undergo further proteolytic cleavage giving rise to a 26 kDa fragment. The LC can undergo further proteolytic cleavage at Arg-311 leading to a 17-kDa fragment and at Arg-478 leading to a 8-kDa fragment.

The protein localises to the secreted. Its function is as follows. Cleaves the alpha-chain at multiple sites and the beta-chain between 'Lys-53' and 'Lys-54' but not the gamma-chain of fibrinogen and therefore does not initiate the formation of the fibrin clot and does not cause the fibrinolysis directly. It does not cleave (activate) prothrombin and plasminogen but converts the inactive single chain urinary plasminogen activator (pro-urokinase) to the active two chain form. Activates coagulation factor VII. May function as a tumor suppressor negatively regulating cell proliferation and cell migration. The protein is Factor VII-activating protease (HABP2) of Bos taurus (Bovine).